Consider the following 328-residue polypeptide: Tetraacyldisaccharide 4'-kinase (328 aa).

Residue 55-62 participates in ATP binding; sequence TVGGNGKT.

It belongs to the LpxK family.

The enzyme catalyses a lipid A disaccharide + ATP = a lipid IVA + ADP + H(+). The protein operates within glycolipid biosynthesis; lipid IV(A) biosynthesis; lipid IV(A) from (3R)-3-hydroxytetradecanoyl-[acyl-carrier-protein] and UDP-N-acetyl-alpha-D-glucosamine: step 6/6. Its function is as follows. Transfers the gamma-phosphate of ATP to the 4'-position of a tetraacyldisaccharide 1-phosphate intermediate (termed DS-1-P) to form tetraacyldisaccharide 1,4'-bis-phosphate (lipid IVA). In Hamiltonella defensa subsp. Acyrthosiphon pisum (strain 5AT), this protein is Tetraacyldisaccharide 4'-kinase.